The following is a 406-amino-acid chain: ATP-dependent RNA helicase eIF4A (406 aa).

The Q motif motif lies at 25–53; it reads DSFDAMDLKPELLRGVYAYGFERPSAIQQ. One can recognise a Helicase ATP-binding domain in the interval 56-226; that stretch reads ILPIIKGNDV…TKFMRDPVRI (171 aa). 69-76 lines the ATP pocket; it reads AQSGTGKT. A DEAD box motif is present at residues 174–177; it reads DEAD. Residues 237–398 enclose the Helicase C-terminal domain; that stretch reads GIKQFYIAVE…EMPMNVAGKF (162 aa).

Belongs to the DEAD box helicase family. eIF4A subfamily. Component of the eIF4F complex, which composition varies with external and internal environmental conditions. It is composed of at least eIF4A, eIF4E and eIF4G.

It is found in the cytoplasm. It carries out the reaction ATP + H2O = ADP + phosphate + H(+). In terms of biological role, ATP-dependent RNA helicase which is a subunit of the eIF4F complex involved in cap recognition and is required for mRNA binding to ribosome. In the current model of translation initiation, eIF4A unwinds RNA secondary structures in the 5'-UTR of mRNAs which is necessary to allow efficient binding of the small ribosomal subunit, and subsequent scanning for the initiator codon. The protein is ATP-dependent RNA helicase eIF4A (tif1) of Aspergillus fumigatus (strain ATCC MYA-4609 / CBS 101355 / FGSC A1100 / Af293) (Neosartorya fumigata).